The following is an 815-amino-acid chain: Phosphatidylinositol 4-phosphate 5-kinase 9 (815 aa).

8 MORN repeats span residues 58 to 80, 81 to 103, 104 to 126, 127 to 149, 150 to 172, 173 to 195, 196 to 218, and 219 to 240; these read YSGS…DGCV, YDGE…SGAS, YDGE…NKLT, YKGR…NGDV, FEGS…NKNV, YLGD…TGDS, YEGS…DGGC, and YVGT…AGTR. Residues 391-809 form the PIPK domain; that stretch reads GHRSYDLMLS…RFLEFIKKVF (419 aa). The activation loop stretch occupies residues 769–790; sequence YNMTKKIEHAYKSLHFDSLSIS.

In terms of assembly, interacts with CINV1. Widely expressed.

The protein localises to the membrane. It is found in the nucleus. The enzyme catalyses a 1,2-diacyl-sn-glycero-3-phospho-(1D-myo-inositol 4-phosphate) + ATP = a 1,2-diacyl-sn-glycero-3-phospho-(1D-myo-inositol-4,5-bisphosphate) + ADP + H(+). Functionally, plays a role in sugar-mediated root development. Interaction with CINV1 induces repression of CINV1 activity and negative regulation of sugar-mediated root cell elongation. The chain is Phosphatidylinositol 4-phosphate 5-kinase 9 (PIP5K9) from Arabidopsis thaliana (Mouse-ear cress).